We begin with the raw amino-acid sequence, 276 residues long: NADPH-dependent 7-cyano-7-deazaguanine reductase (276 aa).

Residue 83–85 coordinates substrate; it reads IES. 85-86 lines the NADPH pocket; it reads SK. Cysteine 184 acts as the Thioimide intermediate in catalysis. Aspartate 191 acts as the Proton donor in catalysis. 223–224 serves as a coordination point for substrate; the sequence is HE. Residue 252 to 253 coordinates NADPH; that stretch reads RG.

It belongs to the GTP cyclohydrolase I family. QueF type 2 subfamily. In terms of assembly, homodimer.

It is found in the cytoplasm. It carries out the reaction 7-aminomethyl-7-carbaguanine + 2 NADP(+) = 7-cyano-7-deazaguanine + 2 NADPH + 3 H(+). It participates in tRNA modification; tRNA-queuosine biosynthesis. Catalyzes the NADPH-dependent reduction of 7-cyano-7-deazaguanine (preQ0) to 7-aminomethyl-7-deazaguanine (preQ1). The polypeptide is NADPH-dependent 7-cyano-7-deazaguanine reductase (Pseudomonas fluorescens (strain SBW25)).